Reading from the N-terminus, the 487-residue chain is Protein DETOXIFICATION 11 (487 aa).

12 helical membrane-spanning segments follow: residues Leu35–Ile55, Phe73–Leu93, Leu122–Gly142, Ala151–Leu171, Leu184–Tyr204, Ile211–Phe231, Ala264–Leu284, Val293–Ala313, Ala330–Gly350, Met377–Val397, Phe412–Leu432, and Val435–Val455.

The protein belongs to the multi antimicrobial extrusion (MATE) (TC 2.A.66.1) family.

The protein resides in the membrane. The protein is Protein DETOXIFICATION 11 of Arabidopsis thaliana (Mouse-ear cress).